The sequence spans 204 residues: Thymidine kinase (204 aa).

ATP contacts are provided by residues 18–25 (GSMFSGKT) and 91–94 (DEGQ). Glutamate 92 (proton acceptor) is an active-site residue. 4 residues coordinate Zn(2+): cysteine 148, cysteine 151, cysteine 180, and histidine 183.

Belongs to the thymidine kinase family. Homotetramer.

It localises to the cytoplasm. The catalysed reaction is thymidine + ATP = dTMP + ADP + H(+). The chain is Thymidine kinase from Bdellovibrio bacteriovorus (strain ATCC 15356 / DSM 50701 / NCIMB 9529 / HD100).